The primary structure comprises 313 residues: Transcription initiation factor IIB 2 (313 aa).

The segment at 13-44 (APKRCPECHSEHLIRDYEHGELICADCGAVIE) adopts a TFIIB-type zinc-finger fold. The Zn(2+) site is built by Cys-17, Cys-20, Cys-36, and Cys-39. 2 consecutive repeat copies span residues 130–213 (QLLN…AKEL) and 224–305 (SYIA…EISK).

This sequence belongs to the TFIIB family.

Stabilizes TBP binding to an archaeal box-A promoter. Also responsible for recruiting RNA polymerase II to the pre-initiation complex (DNA-TBP-TFIIB). The protein is Transcription initiation factor IIB 2 of Thermoplasma volcanium (strain ATCC 51530 / DSM 4299 / JCM 9571 / NBRC 15438 / GSS1).